The following is a 245-amino-acid chain: PF03932 family protein CutC (245 aa).

Belongs to the CutC family.

It is found in the cytoplasm. This Sinorhizobium medicae (strain WSM419) (Ensifer medicae) protein is PF03932 family protein CutC.